Consider the following 710-residue polypeptide: Polyribonucleotide nucleotidyltransferase (710 aa).

Residues Asp491 and Asp497 each coordinate Mg(2+). In terms of domain architecture, KH spans 559–618; sequence PRLITIKINPEKIRDVIGKGGAVIRALTEETGTQIDISDEGVVTIASVDAAAGQEAKRRI. Residues 628–696 enclose the S1 motif domain; sequence GKVYEGTVLK…DRGRLKLSMK (69 aa).

The protein belongs to the polyribonucleotide nucleotidyltransferase family. Requires Mg(2+) as cofactor.

The protein resides in the cytoplasm. The catalysed reaction is RNA(n+1) + phosphate = RNA(n) + a ribonucleoside 5'-diphosphate. Involved in mRNA degradation. Catalyzes the phosphorolysis of single-stranded polyribonucleotides processively in the 3'- to 5'-direction. This is Polyribonucleotide nucleotidyltransferase from Herminiimonas arsenicoxydans.